The primary structure comprises 110 residues: Cell division protein FtsB (110 aa).

Topologically, residues 1 to 3 (MRL) are cytoplasmic. Residues 4–21 (IILCLAALVLLIQFPLWL) form a helical membrane-spanning segment. The Periplasmic portion of the chain corresponds to 22-110 (GKGGWLRVWD…PPKIEPKEKR (89 aa)). A coiled-coil region spans residues 31–64 (DLDQQVIAAQKKNDELRARNAKLNSEVQDLKEGT).

This sequence belongs to the FtsB family. Part of a complex composed of FtsB, FtsL and FtsQ.

It localises to the cell inner membrane. In terms of biological role, essential cell division protein. May link together the upstream cell division proteins, which are predominantly cytoplasmic, with the downstream cell division proteins, which are predominantly periplasmic. The polypeptide is Cell division protein FtsB (Herminiimonas arsenicoxydans).